The primary structure comprises 70 residues: Small ribosomal subunit protein bS21 (70 aa).

This sequence belongs to the bacterial ribosomal protein bS21 family.

This chain is Small ribosomal subunit protein bS21, found in Polynucleobacter asymbioticus (strain DSM 18221 / CIP 109841 / QLW-P1DMWA-1) (Polynucleobacter necessarius subsp. asymbioticus).